The following is an 83-amino-acid chain: Large ribosomal subunit protein bL27 (83 aa).

The protein belongs to the bacterial ribosomal protein bL27 family.

This is Large ribosomal subunit protein bL27 from Thermotoga neapolitana (strain ATCC 49049 / DSM 4359 / NBRC 107923 / NS-E).